A 325-amino-acid polypeptide reads, in one-letter code: Beta-ketoacyl-[acyl-carrier-protein] synthase III (325 aa).

Residues cysteine 119 and histidine 252 contribute to the active site. Residues 253-257 (QANIR) are ACP-binding. Residue asparagine 282 is part of the active site.

This sequence belongs to the thiolase-like superfamily. FabH family. As to quaternary structure, homodimer.

The protein localises to the cytoplasm. It catalyses the reaction malonyl-[ACP] + acetyl-CoA + H(+) = 3-oxobutanoyl-[ACP] + CO2 + CoA. The protein operates within lipid metabolism; fatty acid biosynthesis. Functionally, catalyzes the condensation reaction of fatty acid synthesis by the addition to an acyl acceptor of two carbons from malonyl-ACP. Catalyzes the first condensation reaction which initiates fatty acid synthesis and may therefore play a role in governing the total rate of fatty acid production. Possesses both acetoacetyl-ACP synthase and acetyl transacylase activities. Its substrate specificity determines the biosynthesis of branched-chain and/or straight-chain of fatty acids. The sequence is that of Beta-ketoacyl-[acyl-carrier-protein] synthase III from Polaromonas sp. (strain JS666 / ATCC BAA-500).